The following is a 673-amino-acid chain: UvrABC system protein B (673 aa).

The 158-residue stretch at 26–183 (ANFEAGLAKQ…RHLTDLQYTR (158 aa)) folds into the Helicase ATP-binding domain. Residue 39–46 (GVTGSGKT) coordinates ATP. The short motif at 92 to 115 (YYDYYQPEAYVPSSDTFIEKDSSI) is the Beta-hairpin element. The region spanning 431–597 (QVDDLMSEIH…SVERPISDIM (167 aa)) is the Helicase C-terminal domain. Residues 601–631 (REDAAEKKSGKGRSKSRQVAEETPDYRAMKP) are disordered. Residues 618–630 (QVAEETPDYRAMK) are compositionally biased toward basic and acidic residues. Residues 635–670 (AGKLKSLEQKMYQHAKDLEFEAAAQIRDQIQKLKTA) form the UVR domain.

Belongs to the UvrB family. As to quaternary structure, forms a heterotetramer with UvrA during the search for lesions. Interacts with UvrC in an incision complex.

It localises to the cytoplasm. Its function is as follows. The UvrABC repair system catalyzes the recognition and processing of DNA lesions. A damage recognition complex composed of 2 UvrA and 2 UvrB subunits scans DNA for abnormalities. Upon binding of the UvrA(2)B(2) complex to a putative damaged site, the DNA wraps around one UvrB monomer. DNA wrap is dependent on ATP binding by UvrB and probably causes local melting of the DNA helix, facilitating insertion of UvrB beta-hairpin between the DNA strands. Then UvrB probes one DNA strand for the presence of a lesion. If a lesion is found the UvrA subunits dissociate and the UvrB-DNA preincision complex is formed. This complex is subsequently bound by UvrC and the second UvrB is released. If no lesion is found, the DNA wraps around the other UvrB subunit that will check the other stand for damage. This chain is UvrABC system protein B, found in Xanthomonas oryzae pv. oryzae (strain PXO99A).